The primary structure comprises 578 residues: Probable arginine--tRNA ligase, mitochondrial (578 aa).

The N-terminal 16 residues, 1–16 (MACGFRRSIACQLSRV), are a transit peptide targeting the mitochondrion. Residues 133–135 (SPN), His144, Tyr322, Asp326, and Gln350 each bind L-arginine. The short motif at 133-144 (SPNIAKKFHVGH) is the 'HIGH' region element. Lys568 bears the N6-acetyllysine mark.

It belongs to the class-I aminoacyl-tRNA synthetase family.

The protein localises to the mitochondrion membrane. It carries out the reaction tRNA(Arg) + L-arginine + ATP = L-arginyl-tRNA(Arg) + AMP + diphosphate. Catalyzes the attachment of arginine to tRNA(Arg) in a two-step reaction: arginine is first activated by ATP to form Arg-AMP and then transferred to the acceptor end of tRNA(Arg). The protein is Probable arginine--tRNA ligase, mitochondrial (Rars2) of Mus musculus (Mouse).